The chain runs to 182 residues: Auxin-responsive protein IAA9 (182 aa).

Positions 1–41 (MELELGLAPPNSGHLVVDELSSSSSSGGGSGSAPVSASSAG) are disordered. Positions 3–7 (LELGL) match the EAR-like (transcriptional repression) motif. A compositionally biased stretch (low complexity) spans 32–41 (SAPVSASSAG). The PB1 domain occupies 92–182 (ANYVKVKKEG…RSVKRLKILG (91 aa)).

Belongs to the Aux/IAA family. Homodimers and heterodimers. In terms of tissue distribution, expressed in etiolated shoots and flowers.

The protein resides in the nucleus. Functionally, aux/IAA proteins are short-lived transcriptional factors that function as repressors of early auxin response genes at low auxin concentrations. The protein is Auxin-responsive protein IAA9 (IAA9) of Oryza sativa subsp. japonica (Rice).